A 148-amino-acid chain; its full sequence is 15 kDa excretory/secretory protein (148 aa).

The signal sequence occupies residues 1 to 19 (MFFAFAVLLIALATREAYG).

To T.colubriformis 30 kDa antigenic glycoprotein.

The protein localises to the secreted. This chain is 15 kDa excretory/secretory protein, found in Haemonchus contortus (Barber pole worm).